A 360-amino-acid polypeptide reads, in one-letter code: Peptide chain release factor 1 (360 aa).

Q235 carries the N5-methylglutamine modification.

Belongs to the prokaryotic/mitochondrial release factor family. Methylated by PrmC. Methylation increases the termination efficiency of RF1.

It localises to the cytoplasm. Functionally, peptide chain release factor 1 directs the termination of translation in response to the peptide chain termination codons UAG and UAA. The protein is Peptide chain release factor 1 of Dechloromonas aromatica (strain RCB).